The sequence spans 208 residues: 3-demethoxyubiquinol 3-hydroxylase (208 aa).

The Fe cation site is built by Glu57, Glu87, His90, Glu139, Glu171, and His174.

It belongs to the COQ7 family. It depends on Fe cation as a cofactor.

It is found in the cell membrane. It catalyses the reaction a 5-methoxy-2-methyl-3-(all-trans-polyprenyl)benzene-1,4-diol + AH2 + O2 = a 3-demethylubiquinol + A + H2O. Its pathway is cofactor biosynthesis; ubiquinone biosynthesis. Its function is as follows. Catalyzes the hydroxylation of 2-nonaprenyl-3-methyl-6-methoxy-1,4-benzoquinol during ubiquinone biosynthesis. The protein is 3-demethoxyubiquinol 3-hydroxylase of Burkholderia ambifaria (strain MC40-6).